Reading from the N-terminus, the 22-residue chain is 65 kDa membrane protein (22 aa).

The interval 1-22 (AAKPLDKSSSSLHHGYSKVHVP) is disordered.

The protein resides in the cell membrane. Its function is as follows. Binds various plasma and ECM-proteins. This chain is 65 kDa membrane protein, found in Staphylococcus aureus.